The following is a 568-amino-acid chain: Urease subunit alpha (568 aa).

Residues 130–568 (GGIDTHIHFI…LPMAQRYFLF (439 aa)) enclose the Urease domain. Residues histidine 135, histidine 137, and lysine 218 each coordinate Ni(2+). The residue at position 218 (lysine 218) is an N6-carboxylysine. Residue histidine 220 participates in substrate binding. Ni(2+)-binding residues include histidine 247 and histidine 273. Residue histidine 321 is the Proton donor of the active site. Residue aspartate 361 participates in Ni(2+) binding.

It belongs to the metallo-dependent hydrolases superfamily. Urease alpha subunit family. As to quaternary structure, heterotrimer of UreA (gamma), UreB (beta) and UreC (alpha) subunits. Three heterotrimers associate to form the active enzyme. Ni cation serves as cofactor. In terms of processing, carboxylation allows a single lysine to coordinate two nickel ions.

It is found in the cytoplasm. It carries out the reaction urea + 2 H2O + H(+) = hydrogencarbonate + 2 NH4(+). It functions in the pathway nitrogen metabolism; urea degradation; CO(2) and NH(3) from urea (urease route): step 1/1. The protein is Urease subunit alpha of Burkholderia multivorans (strain ATCC 17616 / 249).